Consider the following 489-residue polypeptide: Tyrosine-protein phosphatase MSG5 (489 aa).

A compositionally biased stretch (basic and acidic residues) spans Met1–Phe18. The disordered stretch occupies residues Met1–Asn30. Ser22, Ser98, and Ser151 each carry phosphoserine. The residue at position 178 (Thr178) is a Phosphothreonine. A Tyrosine-protein phosphatase domain is found at Gly233–Lys375. Cys319 (phosphocysteine intermediate) is an active-site residue. 2 disordered regions span residues Lys375–Thr401 and Leu419–Pro489. Low complexity predominate over residues Leu419–Thr450. Basic and acidic residues predominate over residues Glu451–Lys460.

This sequence belongs to the protein-tyrosine phosphatase family. Non-receptor class dual specificity subfamily.

It catalyses the reaction O-phospho-L-tyrosyl-[protein] + H2O = L-tyrosyl-[protein] + phosphate. Dual specificity phosphatase that dephosphorylates MAP kinase FUS3 on both a Tyr and a Ser or Thr. Has a role in adaptation to pheromone. This Saccharomyces cerevisiae (strain ATCC 204508 / S288c) (Baker's yeast) protein is Tyrosine-protein phosphatase MSG5 (MSG5).